The chain runs to 394 residues: Metallophosphoesterase 1 (394 aa).

A helical membrane pass occupies residues 27–47; it reads TVVVISVLLFCEYFIYYLVLF. Residues aspartate 74, aspartate 116, asparagine 154, histidine 247, histidine 301, and histidine 303 each contribute to the a divalent metal cation site. The helical transmembrane segment at 354–374 threads the bilayer; that stretch reads TVLTTYCAAAAFLLVLILAHF.

Belongs to the metallophosphoesterase superfamily. MPPE1 family. Interacts with GPI-anchor proteins (via the GPI portion). Interacts with TMED10. Requires Mn(2+) as cofactor.

Its subcellular location is the endoplasmic reticulum-Golgi intermediate compartment membrane. Functionally, metallophosphoesterase that catalyzes the removal of a side-chain ethanolamine-phosphate (EtNP) from the second mannose of the GPI-anchor protein intermediate. Participates in the glycan remodeling steps of GPI-anchor maturation to allow an efficient transport of GPI-anchor proteins from the endoplasmic reticulum to the Golgi. The sequence is that of Metallophosphoesterase 1 from Rattus norvegicus (Rat).